Here is a 124-residue protein sequence, read N- to C-terminus: Large ribosomal subunit protein bL20 (124 aa).

It belongs to the bacterial ribosomal protein bL20 family.

In terms of biological role, binds directly to 23S ribosomal RNA and is necessary for the in vitro assembly process of the 50S ribosomal subunit. It is not involved in the protein synthesizing functions of that subunit. The sequence is that of Large ribosomal subunit protein bL20 from Ehrlichia chaffeensis (strain ATCC CRL-10679 / Arkansas).